The chain runs to 277 residues: UBX domain-containing protein 10 (277 aa).

The tract at residues 1-102 (MAIEAPVNFA…APDEMPELLL (102 aa)) is disordered. The span at 16 to 31 (TVVSTAGDSSTWQPSS) shows a compositional bias: polar residues. A compositionally biased stretch (basic residues) spans 35–50 (HVIRPKSAKGRKRPNL). Residues 60-77 (SPSALSSSPPPRSSGSPS) show a composition bias toward low complexity. Ser88 is subject to Phosphoserine. Residues 191 to 268 (DEEPRLLLAV…GILHKSVLGI (78 aa)) form the UBX domain.

It belongs to the UBXN10 family. As to quaternary structure, interacts with CLUAP1; the interaction is direct and mediates interaction with the intraflagellar transport complex B (IFT-B). Interacts with VCP; the interaction is direct.

It is found in the cell projection. The protein localises to the cilium. In terms of biological role, VCP/p97-binding protein required for ciliogenesis. Acts as a tethering factor that facilitates recruitment of VCP/p97 to the intraflagellar transport complex B (IFT-B) in cilia. UBX domain-containing proteins act as tethering factors for VCP/p97 and may specify substrate specificity of VCP/p97. In Mus musculus (Mouse), this protein is UBX domain-containing protein 10.